A 1204-amino-acid chain; its full sequence is MRKPRRKSRQNAEGRRSPSPYSLKCSPTRETLTYAQAQRIVEVDIDGRLHRISIYDPLKIITEDELTAQDITECNSNKENSEQPQFPAKSKKPSSKGKRKESCSKHASGTSFHLPQPSFRVVDTGSQPEAPPLPAAYYRYIEKPPEDLDAEVEYDMDEEDIAWLDMVNEKRRADGHSSVSADTFELLVDRLEKESYLESRSSGAQQSLIDEDAFCCVCLDDECHNSNVILFCDICNLAVHQECYGVPYIPEGQWLCRCCLQSPSRPVDCVLCPNKGGAFKQTSDGHWAHVVCAIWIPEVCFANTVFLEPIEGIDNIPPARWKLTCYICKQKGLGAAIQCHKVNCYTAFHVTCAQRAGLFMKIEPMRETSLNGTTFTVRKTAYCEAHSPSVAVARRKGDSPRSLSEVGDEDGPKEGGGEEEQEEAEEEGQEGQGGVGSPLKGVSKKGKMSLKQKIKKEPEEAGREAPSITLPMVTVPQIPSYRLNKICSGLSFQRKTQFMQRLHNYWLLKRQARNGVPLIRRLHSHLQSQRNAEQREQDEKTSAVKEELKYWQKLRHDLERARLLIELIRKREKLKREQVKVQQAAMELELMPFTVLLRTTLDLLQEKDSAHIFAEPVSLSEVPDYLEFISKPMDFSTMRRKLESHLYHTLEEFEEDFNLIVTNCMKYNAKDTIFHRAAVRLRDLGGAILRHARRQAENIGYDPERGTHLPESPRLEDFYRFSWEDVDNILIPENRAHLSPEAQLKELLEKLDLVSTMRSSGARTRRVRMLRREINALRQKLAQPPPPQLLSLNKTVPNGELPAGSRGDTAVLEQAQQEEPEEEGDRDDSKLPAPPTLEPTGPAPSLSEQESPPDPPTLKPISDSKPSSRFLKSRKVEDEELLEKSALQLGSEPLQCLLSDNGIDRLSLTNPDSHPDTPLGTVGRRTSVLFKKAKNGVKLQRGPDGTLENGEDHGPEDDPASPASTEDEHYSRKRPRSRSCSDSEGERSPQQEEETGVTNGFGKHTESGSDSECSLGLSGGLAFEAGSGLTPPKRSRGKPALSRVPFLEGVNGDSDHSGSGRSLLMPFEDHGDLEPLELVWAKCRGYPSYPALIIDPKMPREGLLHNGVPIPVPPLDVLKLGEQKQAEAGERLFLVLFFDNKRTWQWLPRDKVLPLGVEDTVDKLKMLEGRKTSIRKSVQVAYDRAMIHLSRVRGSHAFVTSSYL.

Disordered regions lie at residues 1–27 (MRKPRRKSRQNAEGRRSPSPYSLKCSP) and 76–127 (SNKE…TGSQ). A compositionally biased stretch (basic residues) spans 89–99 (KSKKPSSKGKR). The PHD-type 1 zinc-finger motif lies at 212–262 (DAFCCVCLDDECHNSNVILFCDICNLAVHQECYGVPYIPEGQWLCRCCLQS). A C2HC pre-PHD-type zinc finger spans residues 266-299 (PVDCVLCPNKGGAFKQTSDGHWAHVVCAIWIPEV). A PHD-type 2 zinc finger spans residues 323–387 (LTCYICKQKG…RKTAYCEAHS (65 aa)). The tract at residues 393–464 (ARRKGDSPRS…KKEPEEAGRE (72 aa)) is disordered. A phosphoserine mark is found at S399 and S402. Over residues 417–429 (GEEEQEEAEEEGQ) the composition is skewed to acidic residues. Over residues 442–454 (VSKKGKMSLKQKI) the composition is skewed to basic residues. K445, K447, and K670 each carry N6-acetyllysine. Residues 588–692 (LELMPFTVLL…DLGGAILRHA (105 aa)) form the Bromo domain. S712 and S739 each carry phosphoserine. Positions 778 to 879 (RQKLAQPPPP…FLKSRKVEDE (102 aa)) are disordered. Residues 816-826 (QQEEPEEEGDR) show a composition bias toward acidic residues. 3 positions are modified to phosphoserine: S899, S961, and S964. Residues 903-1015 (IDRLSLTNPD…ESGSDSECSL (113 aa)) are disordered. Residues 979–990 (SCSDSEGERSPQ) are compositionally biased toward basic and acidic residues. Positions 1075-1158 (PLELVWAKCR…RDKVLPLGVE (84 aa)) constitute a PWWP domain.

Component of some HBO1 complexes composed of KAT7/HBO1, MEAF6, ING4 or ING5, and BRPF3. Component of the MOZ/MORF complex composed at least of ING5, KAT6A, KAT6B, MEAF6 and one of BRPF1, BRD1/BRPF2 and BRPF3. Interacts with KAT7/HBO1; the interaction is direct. As to expression, highly expressed in the adult testis and brain.

It localises to the nucleus. Functionally, scaffold subunit of various histone acetyltransferase (HAT) complexes, such as the MOZ/MORF and HBO1 complexes, which have a histone H3 acetyltransferase activity. Plays a role in DNA replication initiation by directing KAT7/HBO1 specificity towards histone H3 'Lys-14' acetylation (H3K14ac), thereby facilitating the activation of replication origins. Component of the MOZ/MORF complex which has a histone H3 acetyltransferase activity. This Mus musculus (Mouse) protein is Bromodomain and PHD finger-containing protein 3.